Consider the following 209-residue polypeptide: Uracil phosphoribosyltransferase (209 aa).

5-phospho-alpha-D-ribose 1-diphosphate-binding positions include Arg79, Arg104, and 131-139 (DPMLATGGS). Residues Val194 and 199 to 201 (GDA) each bind uracil. Asp200 is a binding site for 5-phospho-alpha-D-ribose 1-diphosphate.

It belongs to the UPRTase family. Mg(2+) serves as cofactor.

It carries out the reaction UMP + diphosphate = 5-phospho-alpha-D-ribose 1-diphosphate + uracil. The protein operates within pyrimidine metabolism; UMP biosynthesis via salvage pathway; UMP from uracil: step 1/1. Its activity is regulated as follows. Allosterically activated by GTP. Its function is as follows. Catalyzes the conversion of uracil and 5-phospho-alpha-D-ribose 1-diphosphate (PRPP) to UMP and diphosphate. In Clostridium botulinum (strain ATCC 19397 / Type A), this protein is Uracil phosphoribosyltransferase.